Reading from the N-terminus, the 338-residue chain is UDP-glucose 4-epimerase (338 aa).

Residues 11-12, 31-36, 58-59, 80-84, Asn-99, Ser-124, Tyr-149, Lys-153, and Phe-178 contribute to the NAD(+) site; these read YI, DNLCNS, DI, and FAGLK. Positions 124 and 149 each coordinate substrate. Tyr-149 (proton acceptor) is an active-site residue. Substrate contacts are provided by residues Asn-179, 199-200, 216-218, Arg-231, 292-295, and Tyr-299; these read NL, AVF, and RDGD.

This sequence belongs to the NAD(P)-dependent epimerase/dehydratase family. As to quaternary structure, homodimer. The cofactor is NAD(+).

The enzyme catalyses UDP-alpha-D-glucose = UDP-alpha-D-galactose. It participates in carbohydrate metabolism; galactose metabolism. Functionally, involved in the metabolism of galactose. Catalyzes the conversion of UDP-galactose (UDP-Gal) to UDP-glucose (UDP-Glc) through a mechanism involving the transient reduction of NAD. This Salmonella typhimurium (strain LT2 / SGSC1412 / ATCC 700720) protein is UDP-glucose 4-epimerase (galE).